The primary structure comprises 214 residues: Homeobox protein HEX homolog pha-2 (214 aa).

Disordered stretches follow at residues 1-50 (MDQK…QKME) and 180-214 (RRVR…LSHG). The segment covering 24 to 34 (SSESPIPTGSE) has biased composition (low complexity). Residues 35-44 (CSLNESSDTT) show a composition bias toward polar residues. The segment at residues 124 to 183 (RKGGQIRFTNEQTDALEHKFDSHKYLSPQERKKLAKSLSLSERQVKTWFQNRRAKWRRVR) is a DNA-binding region (homeobox). Residues 200–214 (SLGQLQSSNPFLSHG) show a composition bias toward polar residues.

The protein resides in the nucleus. In terms of biological role, transcriptional repressor. Involved in pharyngeal development and required for the formation of the pharyngeal isthmus. Plays a role in modulating cytoskeleton in the muscle cells of the isthmus. Regulates expression of the acetylcholinesterase genes ace-1 and ace-2. May regulate its own expression. This is Homeobox protein HEX homolog pha-2 from Caenorhabditis elegans.